The primary structure comprises 316 residues: 4-diphosphocytidyl-2-C-methyl-D-erythritol kinase (316 aa).

Lysine 11 is an active-site residue. 99–109 serves as a coordination point for ATP; it reads PVAAGLAGGST. Residue aspartate 141 is part of the active site.

It belongs to the GHMP kinase family. IspE subfamily.

The enzyme catalyses 4-CDP-2-C-methyl-D-erythritol + ATP = 4-CDP-2-C-methyl-D-erythritol 2-phosphate + ADP + H(+). It functions in the pathway isoprenoid biosynthesis; isopentenyl diphosphate biosynthesis via DXP pathway; isopentenyl diphosphate from 1-deoxy-D-xylulose 5-phosphate: step 3/6. Functionally, catalyzes the phosphorylation of the position 2 hydroxy group of 4-diphosphocytidyl-2C-methyl-D-erythritol. The protein is 4-diphosphocytidyl-2-C-methyl-D-erythritol kinase of Gloeothece citriformis (strain PCC 7424) (Cyanothece sp. (strain PCC 7424)).